The primary structure comprises 895 residues: MQGIEVEFLRSRGYVRKRCPKCGEYFWTLKDRETCGEAPCEPYTFIGRGRQNKSLEEVREDFLRFFERRGHTRINRYPVIARWREDLFLTSASIVDFQPFITAGIVPPPANPLTISQPCIRLKDIDKVGPTMGRHLSIFEMMAHHAFNTKDKFVYWIDRTVELFHEYATSVLGIPEEEITYKEGIWEGGGNAGPDLEPIAGGLEIATLVFMQYRIENGSYVPMDTRVVDTGYGLERITWFLRGDPTGFHAVYGALLHEFMDKLGVSEPDLSLLSEYSKVSSILRELEKGRSISSLRREAALLIGVSEEELEEKIAPLEAVFSLLDHTKALSFMIADGLVPSNVNEGYLGRLLIRRSLRILNQLGSEVPLSELAVRQAEYWSSKGFPELREAIDRIAEIVSIEEERYKEAVERGAKIISDLMREKGRLSVDDLIMLYDSHGLSPDIVRRIAGDVDVPDNFFEMIAARHEARKPEPPKVFERMDELRRYPPTKLLYYQDPYLLEFEARVLGYVDGKMILDRTAFYPEGGGQPSDIGSFEWRGIEVKVVGAEKHGGWILHSVEGDLPPAGEVVRARVDSWRRLNRMRHHTATHVILEAARRVLGSHVWQWGAQKGDEESRLDITHYKGISQEELRRIEMLANEVVMRNIPVRTLWLVRTDAERRYGFTLYQGGVVPDPVLRVVEIEGFNAQACGGTHVLRTGEIGPIKIWRARKIQDGVIRLEFSAGVPAVKRIIDYHQKIKDIAQSAGISEEEIDTFFRGMMEELKELRKERRRMMKEAEERSIERALEAYESTGRHKLSIVRLESIGIDEGIKLADKLSSDRRIVLLTKESGDRVELALLATNYGEGEVDAGSLLRELSREMGGGGGGNWKLGKGSVPKDRLDEFMGVLRKRLEGI.

Zn(2+)-binding residues include His586, His590, Cys690, and His694.

The protein belongs to the class-II aminoacyl-tRNA synthetase family. Zn(2+) serves as cofactor.

It is found in the cytoplasm. The enzyme catalyses tRNA(Ala) + L-alanine + ATP = L-alanyl-tRNA(Ala) + AMP + diphosphate. Its function is as follows. Catalyzes the attachment of alanine to tRNA(Ala) in a two-step reaction: alanine is first activated by ATP to form Ala-AMP and then transferred to the acceptor end of tRNA(Ala). Also edits incorrectly charged Ser-tRNA(Ala) and Gly-tRNA(Ala) via its editing domain. This is Alanine--tRNA ligase from Korarchaeum cryptofilum (strain OPF8).